A 376-amino-acid polypeptide reads, in one-letter code: MRRREALRQAQRWVIKVGSALITDDGRGLAHEQMSAWADQVAALRKAGRQVTLVSSGAVAEGMQRLGWRSRPRALYQLQAAAGVGQSGLVHAWSDGLARHRLQTAQVLLTHDDLSDRRRYLNARSALREMLRLGVVPVVNENDTVVTDEIRFGDNDTLAALVANLVEAEALVVLTDQPGLMDRDPREHPDAVLLDEVRAGDPELERLCGSPAGVLGRGGMLTKVRGAERAARSGTYTVVASGREGRVIQRLADAEPGLGTLFVPDQEPLAARKQWLASHLQTRGALSLDEGAARALRESGKSLLPVGVVAVEGGFSRGEMVVCRDPAGIEVARGLVNYAAEEARLICGRASRDIETTLGYVDEPELIHRDNMVVTV.

Residue Lys-16 coordinates ATP. Positions 56, 143, and 155 each coordinate substrate. An ATP-binding site is contributed by 175–176; the sequence is TD. Residues 283–361 enclose the PUA domain; that stretch reads RGALSLDEGA…RDIETTLGYV (79 aa).

This sequence belongs to the glutamate 5-kinase family.

It is found in the cytoplasm. It catalyses the reaction L-glutamate + ATP = L-glutamyl 5-phosphate + ADP. It functions in the pathway amino-acid biosynthesis; L-proline biosynthesis; L-glutamate 5-semialdehyde from L-glutamate: step 1/2. Catalyzes the transfer of a phosphate group to glutamate to form L-glutamate 5-phosphate. The chain is Glutamate 5-kinase from Halorhodospira halophila (strain DSM 244 / SL1) (Ectothiorhodospira halophila (strain DSM 244 / SL1)).